The chain runs to 386 residues: Eukaryotic translation initiation factor 3 subunit M (386 aa).

The PCI domain maps to 181-343; it reads NSELASKVMI…RKVHISSTMH (163 aa).

It belongs to the eIF-3 subunit M family. As to quaternary structure, component of the eukaryotic translation initiation factor 3 (eIF-3) complex.

Its subcellular location is the cytoplasm. Component of the eukaryotic translation initiation factor 3 (eIF-3) complex, which is involved in protein synthesis of a specialized repertoire of mRNAs and, together with other initiation factors, stimulates binding of mRNA and methionyl-tRNAi to the 40S ribosome. The eIF-3 complex specifically targets and initiates translation of a subset of mRNAs involved in cell proliferation. This is Eukaryotic translation initiation factor 3 subunit M from Culex quinquefasciatus (Southern house mosquito).